The sequence spans 101 residues: NAD(P)H-quinone oxidoreductase subunit 4L, chloroplastic (101 aa).

3 helical membrane-spanning segments follow: residues 2–22 (MLEH…YGLI), 32–52 (MCLE…SDFF), and 61–81 (IFSI…PAIV).

It belongs to the complex I subunit 4L family. NDH is composed of at least 16 different subunits, 5 of which are encoded in the nucleus.

The protein localises to the plastid. It localises to the chloroplast thylakoid membrane. The enzyme catalyses a plastoquinone + NADH + (n+1) H(+)(in) = a plastoquinol + NAD(+) + n H(+)(out). It carries out the reaction a plastoquinone + NADPH + (n+1) H(+)(in) = a plastoquinol + NADP(+) + n H(+)(out). Its function is as follows. NDH shuttles electrons from NAD(P)H:plastoquinone, via FMN and iron-sulfur (Fe-S) centers, to quinones in the photosynthetic chain and possibly in a chloroplast respiratory chain. The immediate electron acceptor for the enzyme in this species is believed to be plastoquinone. Couples the redox reaction to proton translocation, and thus conserves the redox energy in a proton gradient. The chain is NAD(P)H-quinone oxidoreductase subunit 4L, chloroplastic from Vitis vinifera (Grape).